The chain runs to 393 residues: Meiotic driver wtf19 (393 aa).

The tract at residues 1–98 is disordered; it reads MKNKYYPLRS…SSGTADNSST (98 aa). A compositionally biased stretch (basic and acidic residues) spans 11-29; that stretch reads SMDELSAKNDNEIDLEKGP. 2 stretches are compositionally biased toward polar residues: residues 57–72 and 89–98; these read GANNPNLFNTDESTTP and SSGTADNSST. 8 helical membrane-spanning segments follow: residues 104–124, 137–157, 167–187, 208–228, 233–253, 269–289, 296–316, and 332–352; these read AFLSFISIFVLNVPAVCYLTY, WVYFAVWCASCLMIFISLWYF, VTVIFLAQCIKVTVVFLAQCV, CVKVTAVFLAQCVKVISIGLF, EMMIIIWLLWLIICCILFGCV, CTISAVLLLIVSSVCIPFWTF, LAKVFLLQSGIVLVLNGTMFL, and VLFIMGNVLFLCEMECPGALI.

It belongs to the WTF family. As to quaternary structure, homomer. Forms protein aggregates. The two isoforms can interact with each other and with themselves. High sequence similarity is required for their interaction.

It localises to the spore membrane. Its subcellular location is the vacuole membrane. It is found in the ascus epiplasm. The protein resides in the cytoplasm. The protein localises to the endoplasmic reticulum membrane. Its function is as follows. Promotes unequal transmission of alleles from the parental zygote to progeny spores by acting as poison/antidote system where the poison and antidote proteins are produced from the same locus; the poison component is trans-acting and targets all spores within an ascus whereas the antidote component is spore-specific, leading to poisoning of all progeny that do not inherit the allele. In terms of biological role, localizes isoform 2 to the vacuole thereby facilitating its degradation. Functionally, forms toxic aggregates that disrupt spore maturation. In Schizosaccharomyces pombe (strain 972 / ATCC 24843) (Fission yeast), this protein is Meiotic driver wtf19.